The following is a 723-amino-acid chain: Threonine--tRNA ligase, mitochondrial (723 aa).

Ser57 bears the Phosphoserine mark. The 63-residue stretch at 64-126 (RTIKISLPEG…ETDCHLRFLT (63 aa)) folds into the TGS domain.

Belongs to the class-II aminoacyl-tRNA synthetase family. As to quaternary structure, homodimer.

It is found in the mitochondrion matrix. The catalysed reaction is tRNA(Thr) + L-threonine + ATP = L-threonyl-tRNA(Thr) + AMP + diphosphate + H(+). Catalyzes the attachment of threonine to tRNA(Thr) in a two-step reaction: threonine is first activated by ATP to form Thr-AMP and then transferred to the acceptor end of tRNA(Thr). Also edits incorrectly charged tRNA(Thr) via its editing domain. The protein is Threonine--tRNA ligase, mitochondrial (Tars2) of Rattus norvegicus (Rat).